A 47-amino-acid polypeptide reads, in one-letter code: uncharacterized protein (47 aa).

A disordered region spans residues 22–47 (VGPRTKRANQASPPVGRHSSRLMCPG).

This is an uncharacterized protein from Saccharomyces cerevisiae (strain ATCC 204508 / S288c) (Baker's yeast).